The primary structure comprises 208 residues: Small ribosomal subunit protein eS8 (208 aa).

A disordered region spans residues 1–37 (MGISRDNWHKRRKTGGKRKPYHKKRKYEPGRPAANTK). The span at 8 to 26 (WHKRRKTGGKRKPYHKKRK) shows a compositional bias: basic residues.

The protein belongs to the eukaryotic ribosomal protein eS8 family. Component of the small ribosomal subunit. Identified in a IGF2BP1-dependent mRNP granule complex containing untranslated mRNAs. Part of the small subunit (SSU) processome, composed of more than 70 proteins and the RNA chaperone small nucleolar RNA (snoRNA) U3.

It is found in the cytoplasm. It localises to the membrane. The protein localises to the nucleus. Its subcellular location is the nucleolus. Functionally, component of the small ribosomal subunit. The ribosome is a large ribonucleoprotein complex responsible for the synthesis of proteins in the cell. Part of the small subunit (SSU) processome, first precursor of the small eukaryotic ribosomal subunit. During the assembly of the SSU processome in the nucleolus, many ribosome biogenesis factors, an RNA chaperone and ribosomal proteins associate with the nascent pre-rRNA and work in concert to generate RNA folding, modifications, rearrangements and cleavage as well as targeted degradation of pre-ribosomal RNA by the RNA exosome. This Xenopus laevis (African clawed frog) protein is Small ribosomal subunit protein eS8 (rps8).